We begin with the raw amino-acid sequence, 115 residues long: Ig kappa chain V region 3315 (115 aa).

Residues 1-24 (AQIVMTQTPSSVSAAVGGTVTINC) form a framework-1 region. The complementarity-determining-1 stretch occupies residues 25 to 37 (QSSQSVYENGRLS). The tract at residues 38–52 (WFQQKPGQPPKRLIY) is framework-2. Positions 53–59 (RASTLAS) are complementarity-determining-2. Residues 60 to 91 (GVSSRFTGSGSGTQFTLSISDVQCDDAATYYC) are framework-3. Residues 92–104 (LGNYDCSSGDSFT) form a complementarity-determining-3 region. A framework-4 region spans residues 105-114 (FGGGTEVVVK).

This is Ig kappa chain V region 3315 from Oryctolagus cuniculus (Rabbit).